Here is a 76-residue protein sequence, read N- to C-terminus: Acyl carrier protein (76 aa).

The Carrier domain occupies 1 to 76 (MATFDKVKDI…DVVNYIEQNQ (76 aa)). An O-(pantetheine 4'-phosphoryl)serine modification is found at S36.

Belongs to the acyl carrier protein (ACP) family. Post-translationally, 4'-phosphopantetheine is transferred from CoA to a specific serine of apo-ACP by AcpS. This modification is essential for activity because fatty acids are bound in thioester linkage to the sulfhydryl of the prosthetic group.

Its subcellular location is the cytoplasm. It functions in the pathway lipid metabolism; fatty acid biosynthesis. In terms of biological role, carrier of the growing fatty acid chain in fatty acid biosynthesis. This chain is Acyl carrier protein, found in Natranaerobius thermophilus (strain ATCC BAA-1301 / DSM 18059 / JW/NM-WN-LF).